The following is a 334-amino-acid chain: Succinylglutamate desuccinylase (334 aa).

Zn(2+) is bound by residues H59, E62, and H151. Residue E215 is part of the active site.

This sequence belongs to the AspA/AstE family. Succinylglutamate desuccinylase subfamily. Zn(2+) is required as a cofactor.

The enzyme catalyses N-succinyl-L-glutamate + H2O = L-glutamate + succinate. Its pathway is amino-acid degradation; L-arginine degradation via AST pathway; L-glutamate and succinate from L-arginine: step 5/5. Its function is as follows. Transforms N(2)-succinylglutamate into succinate and glutamate. The protein is Succinylglutamate desuccinylase of Pseudomonas fluorescens (strain SBW25).